A 246-amino-acid polypeptide reads, in one-letter code: Alpha-amylase inhibitor 1 (246 aa).

The N-terminal stretch at 1-23 (MIMASSKLLSLALFLALLSHANS) is a signal peptide. Asparagine 35, asparagine 88, and asparagine 163 each carry an N-linked (GlcNAc...) asparagine glycan. Positions 240-246 (IVLNKIL) are excised as a propeptide.

This sequence belongs to the leguminous lectin family. As to quaternary structure, heterodimer of chain 1 and chain 2. Post-translationally, proteolytic processing yields active form.

Functionally, lectin and alpha-amylase inhibitor. Acts as a defensive protein against insects. This Phaseolus vulgaris (Kidney bean) protein is Alpha-amylase inhibitor 1 (LLP).